The sequence spans 204 residues: Dephospho-CoA kinase (204 aa).

Residues Val-3–His-204 form the DPCK domain. Position 11-16 (Gly-11–Tyr-16) interacts with ATP.

This sequence belongs to the CoaE family.

Its subcellular location is the cytoplasm. It carries out the reaction 3'-dephospho-CoA + ATP = ADP + CoA + H(+). The protein operates within cofactor biosynthesis; coenzyme A biosynthesis; CoA from (R)-pantothenate: step 5/5. Functionally, catalyzes the phosphorylation of the 3'-hydroxyl group of dephosphocoenzyme A to form coenzyme A. The chain is Dephospho-CoA kinase from Ralstonia nicotianae (strain ATCC BAA-1114 / GMI1000) (Ralstonia solanacearum).